Consider the following 389-residue polypeptide: Probable dual-specificity RNA methyltransferase RlmN (389 aa).

The Proton acceptor role is filled by Glu114. The 239-residue stretch at 120 to 358 (QHYGLSVCVT…CVVRQEHGTD (239 aa)) folds into the Radical SAM core domain. Cys127 and Cys363 are oxidised to a cystine. Cys134, Cys138, and Cys141 together coordinate [4Fe-4S] cluster. Residues 186-187 (GE), Ser218, 241-243 (SLH), and Asn319 each bind S-adenosyl-L-methionine. Cys363 acts as the S-methylcysteine intermediate in catalysis. Residues 370 to 389 (TMKRDRQKAVAEASGKSEGK) are disordered. Residues 371–389 (MKRDRQKAVAEASGKSEGK) are compositionally biased toward basic and acidic residues.

It belongs to the radical SAM superfamily. RlmN family. The cofactor is [4Fe-4S] cluster.

The protein resides in the cytoplasm. It catalyses the reaction adenosine(2503) in 23S rRNA + 2 reduced [2Fe-2S]-[ferredoxin] + 2 S-adenosyl-L-methionine = 2-methyladenosine(2503) in 23S rRNA + 5'-deoxyadenosine + L-methionine + 2 oxidized [2Fe-2S]-[ferredoxin] + S-adenosyl-L-homocysteine. It carries out the reaction adenosine(37) in tRNA + 2 reduced [2Fe-2S]-[ferredoxin] + 2 S-adenosyl-L-methionine = 2-methyladenosine(37) in tRNA + 5'-deoxyadenosine + L-methionine + 2 oxidized [2Fe-2S]-[ferredoxin] + S-adenosyl-L-homocysteine. Its function is as follows. Specifically methylates position 2 of adenine 2503 in 23S rRNA and position 2 of adenine 37 in tRNAs. The protein is Probable dual-specificity RNA methyltransferase RlmN of Streptococcus thermophilus (strain CNRZ 1066).